The primary structure comprises 392 residues: MGYYSLTETTAIQYAKEHGYFEKKANVVCHEIGDGNLNYVFKLDDGEKSIIIKQALPYAKVVGESWPLSIKRATIESKALQIFAKYVPDYVPVVYSHDEELAVTVIEDLSRLTITRKGLIDGEGYPLLSQHIGRFLAHVLFYTSDFGLQSEEKRVLEGTFVNPDLSKITEDLVFTDPFGHYDTNDYESDLQSVIDELWSDKTLKLKVAQYKYKFLTRKEALIHGDLHTGSIFSSPSETKVIDPEFATYGPFGFDIGQFIANLLLNALSREEEKRSVLFFHIEKTWSYFVENFTKLWIGEGVEAYTKEKQWLPIILQNIFTDAVGFAGCELIRRTIGLAHVADLDGIANKENRIQAKKQALSLGRELIKYEAKCADIQLFRTLFQQTVGGVKA.

Residues Asn-38, Lys-53, and 107 to 109 (EDL) contribute to the ATP site. Asp-225 serves as a coordination point for substrate. 242–244 (DPE) serves as a coordination point for ATP. Arg-332 contributes to the substrate binding site.

It belongs to the methylthioribose kinase family. In terms of assembly, homodimer.

It carries out the reaction 5-(methylsulfanyl)-D-ribose + ATP = 5-(methylsulfanyl)-alpha-D-ribose 1-phosphate + ADP + H(+). It functions in the pathway amino-acid biosynthesis; L-methionine biosynthesis via salvage pathway; S-methyl-5-thio-alpha-D-ribose 1-phosphate from S-methyl-5'-thioadenosine (hydrolase route): step 2/2. Catalyzes the phosphorylation of methylthioribose into methylthioribose-1-phosphate. This is Methylthioribose kinase from Bacillus mycoides (strain KBAB4) (Bacillus weihenstephanensis).